The following is a 502-amino-acid chain: MKFSAYLWWLFLNLALVKGTSLLSNVTLAEDSFWEHFQAYTNTKHLNQEWITSEAVNNEGSKIYGAQWRLSQGRLQGSAWDKGIAVRTGNAAAMIGHLLETPINVSETDTLVVQYEIKLDNSLTCGGAFIKLMSGFMNVEALKHYAPDTEGVELVFGPDYCAPEINGVQFAINKVDKITHESKLRYLQEMPLSKLTDTSQSHLYTLIIDESAQSFQILIDGKTVMVREHIEDKKKVNFEPPITPPLMIPDVSVAKPHDWDDRIRIPDPEAVKLSDRDERDPLMIPHPDGTEPPEWNSSIPEYILDPNAQKPSWWKELEHGEWIPPMIKNPLCTAERGCGQQIPGLINNAKYKGPGELNEIINPNYMGEWHPPEIENPLYYEEQHPLRIENVISGVILEFWSGSPNMLISNIYVGKNVTEAQIIGNKTWLMRDRAFRGSDGPTERKFMNSRLGNLQTTFHNERESPNPFDRIIDRILEQPLKFVLTAAVVLLTTSVLCCVVFT.

The N-terminal stretch at M1 to G19 is a signal peptide. Residues T20–K481 are Lumenal-facing. N-linked (GlcNAc...) asparagine glycans are attached at residues N25 and N104. A disulfide bridge links C125 with C161. 2 residues coordinate an alpha-D-glucoside: K131 and D159. The tract at residues I248 to E381 is p domain (Extended arm). 5 consecutive repeat copies span residues D250–D261, D267–E278, H286–S297, D305–E316, and G320–P330. 4 X approximate repeats stretches follow at residues D250–E316 and G320–P377. N-linked (GlcNAc...) asparagine glycosylation occurs at N296. C332 and C338 are disulfide-bonded. 3 repeat units span residues G339–A349, G353–P363, and G367–P377. An alpha-D-glucoside is bound at residue E398. 2 N-linked (GlcNAc...) asparagine glycosylation sites follow: N416 and N425. A helical transmembrane segment spans residues F482–T502.

The protein belongs to the calreticulin family. Interacts with MPD1.

It is found in the endoplasmic reticulum membrane. Functionally, interacts with newly synthesized monoglucosylated glycoproteins in the endoplasmic reticulum. It may act in assisting protein assembly and/or in the retention within the ER of unassembled protein subunits. It seems to play a major role in the quality control apparatus of the ER by the retention of incorrectly folded proteins. The chain is Calnexin homolog (CNE1) from Saccharomyces cerevisiae (strain ATCC 204508 / S288c) (Baker's yeast).